The primary structure comprises 479 residues: Sulfate adenylyltransferase subunit 1 (479 aa).

In terms of domain architecture, tr-type G spans 25 to 239 (KSLLRFLTCG…EVLETVDIQR (215 aa)). Positions 34–41 (GSVDDGKS) are G1. Residue 34–41 (GSVDDGKS) participates in GTP binding. A G2 region spans residues 92–96 (GITID). Positions 113–116 (DTPG) are G3. GTP is bound by residues 113-117 (DTPGH) and 168-171 (NKMD). The tract at residues 168-171 (NKMD) is G4. Positions 206–208 (SAL) are G5.

Belongs to the TRAFAC class translation factor GTPase superfamily. Classic translation factor GTPase family. CysN/NodQ subfamily. As to quaternary structure, heterodimer composed of CysD, the smaller subunit, and CysN.

It catalyses the reaction sulfate + ATP + H(+) = adenosine 5'-phosphosulfate + diphosphate. The protein operates within sulfur metabolism; hydrogen sulfide biosynthesis; sulfite from sulfate: step 1/3. Functionally, with CysD forms the ATP sulfurylase (ATPS) that catalyzes the adenylation of sulfate producing adenosine 5'-phosphosulfate (APS) and diphosphate, the first enzymatic step in sulfur assimilation pathway. APS synthesis involves the formation of a high-energy phosphoric-sulfuric acid anhydride bond driven by GTP hydrolysis by CysN coupled to ATP hydrolysis by CysD. The polypeptide is Sulfate adenylyltransferase subunit 1 (Salmonella paratyphi B (strain ATCC BAA-1250 / SPB7)).